A 510-amino-acid chain; its full sequence is 2,3-bisphosphoglycerate-independent phosphoglycerate mutase (510 aa).

Residues aspartate 12 and serine 62 each contribute to the Mn(2+) site. The Phosphoserine intermediate role is filled by serine 62. Substrate is bound by residues histidine 123, arginine 153 to aspartate 154, arginine 185, arginine 191, arginine 260 to arginine 263, and lysine 335. Residues aspartate 402, histidine 406, aspartate 443, histidine 444, and histidine 461 each coordinate Mn(2+).

It belongs to the BPG-independent phosphoglycerate mutase family. Monomer. The cofactor is Mn(2+).

The enzyme catalyses (2R)-2-phosphoglycerate = (2R)-3-phosphoglycerate. Its pathway is carbohydrate degradation; glycolysis; pyruvate from D-glyceraldehyde 3-phosphate: step 3/5. In terms of biological role, catalyzes the interconversion of 2-phosphoglycerate and 3-phosphoglycerate. In Listeria innocua serovar 6a (strain ATCC BAA-680 / CLIP 11262), this protein is 2,3-bisphosphoglycerate-independent phosphoglycerate mutase.